We begin with the raw amino-acid sequence, 480 residues long: Aromatic-L-amino-acid decarboxylase (480 aa).

Lys-292 is subject to N6-(pyridoxal phosphate)lysine.

Belongs to the group II decarboxylase family. Pyridoxal 5'-phosphate is required as a cofactor.

It catalyses the reaction L-tryptophan + H(+) = tryptamine + CO2. The enzyme catalyses L-phenylalanine + H(+) = 2-phenylethylamine + CO2. It carries out the reaction 5-hydroxy-L-tryptophan + H(+) = serotonin + CO2. The catalysed reaction is L-dopa + H(+) = dopamine + CO2. Involved in bacillamide C biosynthesis. Catalyzes the decarboxylation of L-tryptophan to tryptamine. The tryptamine obtained is then probably incorporated into the bacillamide C peptide, which is derived from the amino acids alanine, cysteine and tryptophan through nonribosomal peptide synthetase (NRPS) biosynthesis strategy. L-tryptophan is the best substrate, but the enzyme displays broad substrate specificity for various aromatic amino acids in vitro and it can also catalyze the decarboxylation of L-phenylalanine, 5-hydroxy-L-tryptophan (L-HTP) and L-DOPA, with lower efficiency. Exhibits weak activity with L-tyrosine. The chain is Aromatic-L-amino-acid decarboxylase from Bacillus atrophaeus.